We begin with the raw amino-acid sequence, 341 residues long: 2-acylglycerol O-acyltransferase 3 (341 aa).

A run of 2 helical transmembrane segments spans residues 29 to 49 (YVLT…VLLF) and 50 to 70 (TSLW…WDTP). The N-linked (GlcNAc...) asparagine glycan is linked to N126. The chain crosses the membrane as a helical span at residues 137–157 (LFPGLRPWLAVLAGLFYLPVY).

This sequence belongs to the diacylglycerol acyltransferase family. Ubiquitinated. Ubiquitination leads to proteasomal degradation. As to expression, selectively expressed in the digestive system. Highly expressed in the ileum, and at lower level in jejunum, duodenum, colon, cecum and the rectum. Not expressed in the stomach and the esophagus and trachea. Expressed at very low level in liver.

It is found in the endoplasmic reticulum membrane. Its subcellular location is the cytoplasm. The protein resides in the perinuclear region. The enzyme catalyses a 2-acylglycerol + an acyl-CoA = a 1,2-diacylglycerol + CoA. It carries out the reaction an acyl-CoA + a 1,2-diacyl-sn-glycerol = a triacyl-sn-glycerol + CoA. It catalyses the reaction 2-(9Z-octadecenoyl)-glycerol + (9Z)-octadecenoyl-CoA = 1,2-di-(9Z-octadecenoyl)-sn-glycerol + CoA. The catalysed reaction is 2-(9Z-octadecenoyl)-glycerol + hexadecanoyl-CoA = 1-hexadecanoyl-2-(9Z-octadecenoyl)-sn-glycerol + CoA. The enzyme catalyses 1,2-di-(9Z-octadecenoyl)-sn-glycerol + (9Z)-octadecenoyl-CoA = 1,2,3-tri-(9Z-octadecenoyl)-glycerol + CoA. It carries out the reaction 1-hexadecanoyl-2-(9Z-octadecenoyl)-sn-glycerol + hexadecanoyl-CoA = 1,3-dihexadecanoyl-2-(9Z-octadecenoyl)glycerol + CoA. It catalyses the reaction all-trans-retinol + hexadecanoyl-CoA = all-trans-retinyl hexadecanoate + CoA. The catalysed reaction is 1-O-(9Z-octadecenyl)-glycerol + (9Z)-octadecenoyl-CoA = 1-O-(9Z-octadecyl)-3-(9Z-octadecenoyl)-glycerol + CoA. The enzyme catalyses 1-O-(9Z-octadecyl)-3-(9Z-octadecenoyl)-glycerol + (9Z)-octadecenoyl-CoA = 1-O-(9Z-octadecenyl)-2,3-di-(9Z-octadecenoyl)glycerol + CoA. It functions in the pathway glycerolipid metabolism; triacylglycerol biosynthesis. Its function is as follows. Catalyzes the formation of diacylglycerol from 2-monoacylglycerol and fatty acyl-CoA. Also able to catalyze the terminal step in triacylglycerol synthesis by using diacylglycerol and fatty acyl-CoA as substrates. Has a preference toward palmitoyl-CoA and oleoyl-CoA. May be involved in absorption of dietary fat in the small intestine by catalyzing the resynthesis of triacylglycerol in enterocytes. Also able to use 1-monoalkylglycerol (1-MAkG) as an acyl acceptor for the synthesis of monoalkyl-monoacylglycerol (MAMAG). This Homo sapiens (Human) protein is 2-acylglycerol O-acyltransferase 3.